The primary structure comprises 89 residues: Small ribosomal subunit protein uS17 (89 aa).

Belongs to the universal ribosomal protein uS17 family. Part of the 30S ribosomal subunit.

In terms of biological role, one of the primary rRNA binding proteins, it binds specifically to the 5'-end of 16S ribosomal RNA. The protein is Small ribosomal subunit protein uS17 of Lactiplantibacillus plantarum (strain ATCC BAA-793 / NCIMB 8826 / WCFS1) (Lactobacillus plantarum).